The sequence spans 374 residues: Chaperone protein DnaJ (374 aa).

The region spanning 5-70 is the J domain; that stretch reads DYYEVLGVAR…DKRARYDRFG (66 aa). The segment at 135-213 adopts a CR-type zinc-finger fold; that stretch reads GDEVTLRLPK…CKGSGILQQV (79 aa). Positions 148, 151, 165, 168, 187, 190, 201, and 204 each coordinate Zn(2+). CXXCXGXG motif repeat units follow at residues 148–155, 165–172, 187–194, and 201–208; these read CDECNGSG, CRHCGGNG, CPVCRGEG, and CPKCKGSG.

It belongs to the DnaJ family. Homodimer. Requires Zn(2+) as cofactor.

It localises to the cytoplasm. Its function is as follows. Participates actively in the response to hyperosmotic and heat shock by preventing the aggregation of stress-denatured proteins and by disaggregating proteins, also in an autonomous, DnaK-independent fashion. Unfolded proteins bind initially to DnaJ; upon interaction with the DnaJ-bound protein, DnaK hydrolyzes its bound ATP, resulting in the formation of a stable complex. GrpE releases ADP from DnaK; ATP binding to DnaK triggers the release of the substrate protein, thus completing the reaction cycle. Several rounds of ATP-dependent interactions between DnaJ, DnaK and GrpE are required for fully efficient folding. Also involved, together with DnaK and GrpE, in the DNA replication of plasmids through activation of initiation proteins. The chain is Chaperone protein DnaJ from Nitratidesulfovibrio vulgaris (strain DSM 19637 / Miyazaki F) (Desulfovibrio vulgaris).